A 458-amino-acid polypeptide reads, in one-letter code: GTPase Der (458 aa).

2 consecutive EngA-type G domains span residues 4 to 169 (PSIA…PKDF) and 178 to 353 (VMMS…TQHR). GTP contacts are provided by residues 10–17 (GRPNVGKS), 57–61 (DTGGL), 120–123 (NKCE), 184–191 (GRPNVGKS), 231–235 (DTAGI), and 296–299 (NKWD). Positions 354-439 (MRVTTSVVNE…PIILLWRGKQ (86 aa)) constitute a KH-like domain.

This sequence belongs to the TRAFAC class TrmE-Era-EngA-EngB-Septin-like GTPase superfamily. EngA (Der) GTPase family. As to quaternary structure, associates with the 50S ribosomal subunit.

Functionally, GTPase that plays an essential role in the late steps of ribosome biogenesis. In Prochlorococcus marinus (strain MIT 9515), this protein is GTPase Der.